We begin with the raw amino-acid sequence, 460 residues long: Transcription factor AP-2-beta (460 aa).

Residue Lys-21 forms a Glycyl lysine isopeptide (Lys-Gly) (interchain with G-Cter in SUMO) linkage. The tract at residues His-30–Arg-139 is disordered. Polar residues predominate over residues Ser-35 to Tyr-51. Over residues Leu-121 to Leu-132 the composition is skewed to low complexity. At Ser-258 the chain carries Phosphoserine; by PKA. The segment at Asn-435–Lys-460 is disordered. The span at Thr-451–Lys-460 shows a compositional bias: basic and acidic residues.

Belongs to the AP-2 family. In terms of assembly, binds DNA as a dimer. Can form homodimers or heterodimers with other AP-2 family members. Interacts with CITED4. Interacts with UBE2I. Interacts with KCTD1; this interaction represses transcription activation. Interacts with CITED2 (via C-terminus); the interaction stimulates TFAP2B-transcriptional activity. Sumoylated on Lys-21; which inhibits transcriptional activity.

Its subcellular location is the nucleus. In terms of biological role, sequence-specific DNA-binding protein that interacts with inducible viral and cellular enhancer elements to regulate transcription of selected genes. AP-2 factors bind to the consensus sequence 5'-GCCNNNGGC-3' and activate genes involved in a large spectrum of important biological functions including proper eye, face, body wall, limb and neural tube development. They also suppress a number of genes including MCAM/MUC18, C/EBP alpha and MYC. AP-2-beta appears to be required for normal face and limb development and for proper terminal differentiation and function of renal tubular epithelia. This chain is Transcription factor AP-2-beta (TFAP2B), found in Canis lupus familiaris (Dog).